Consider the following 467-residue polypeptide: Argininosuccinate lyase (467 aa).

Belongs to the lyase 1 family. Argininosuccinate lyase subfamily.

The protein resides in the cytoplasm. It catalyses the reaction 2-(N(omega)-L-arginino)succinate = fumarate + L-arginine. It functions in the pathway amino-acid biosynthesis; L-arginine biosynthesis; L-arginine from L-ornithine and carbamoyl phosphate: step 3/3. This is Argininosuccinate lyase from Rhizobium etli (strain ATCC 51251 / DSM 11541 / JCM 21823 / NBRC 15573 / CFN 42).